The chain runs to 150 residues: Protein-export protein SecB (150 aa).

This sequence belongs to the SecB family. In terms of assembly, homotetramer, a dimer of dimers. One homotetramer interacts with 1 SecA dimer.

It is found in the cytoplasm. One of the proteins required for the normal export of preproteins out of the cell cytoplasm. It is a molecular chaperone that binds to a subset of precursor proteins, maintaining them in a translocation-competent state. It also specifically binds to its receptor SecA. This Polaromonas sp. (strain JS666 / ATCC BAA-500) protein is Protein-export protein SecB.